The following is a 479-amino-acid chain: Transcription factor CP2-like protein 1 (479 aa).

Positions 1–52 (MLFWHTQPEHYNQHNSGSYLRDVLALPIFKQEEPQLSPENGARLPPLQYVLC) are mediate transcriptional repression. The region spanning 43–280 (RLPPLQYVLC…PSPSYNGSPN (238 aa)) is the Grh/CP2 DB domain. Disordered regions lie at residues 219 to 248 (KPKG…YQPS) and 260 to 301 (WPDV…LPLG). The segment covering 221-245 (KGADRKQKTDREKMEKRTAQEKEKY) has biased composition (basic and acidic residues). The interval 261–365 (PDVPYQANNT…IRLFNAIKGR (105 aa)) is SAM2-like domain. Residues 266–292 (QANNTPSPSYNGSPNSFGLREGNSSPN) are compositionally biased toward polar residues.

This sequence belongs to the grh/CP2 family. CP2 subfamily. Forms homohexamers via its SAM-like domain. Interacts with Mta1; which is indispensable for Tfcp2l1-mediated self-renewal-promoting effect and endoderm-inhibiting action. In terms of tissue distribution, highly expressed in placenta, testis, small intestine, kidney and stomach. Low levels of expression in lung, mesenteric lymph nodes, muscle, ovary, and thymus. No expression was detected in brain, heart, liver, and spleen. Expressed in eccrine glands in the palm. Expression is prominent in both kidney collecting ducts intercalated (IC) and principal (PC) cells. Also expressed in the thick limb of Henle and connecting segments of the nephron.

It is found in the nucleus. Transcription factor that facilitates establishment and maintenance of pluripotency in embryonic stem cells (ESCs). With Klf2, acts as the major effector of self-renewal that mediates induction of pluripotency downstream of LIF/Stat3 and Wnt/beta-catenin signaling. Required for normal duct development in the salivary gland and kidney. Coordinates the development of the kidney collecting ducts intercalated (IC) and principal (PC) cells, which regulate acid-base and salt-water homeostasis, respectively. Regulates the expression of IC genes including subunits B1 and D2 of the V-ATPase complex, Oxgr1, Ca12, Slc4a1, Aqp6 and IC-specific transcription factor Foxi1. Also regulates the expression of Jag1 and subsequent notch signaling in the collecting duct. Jag1 initiates notch signaling in PCs but inhibits notch signaling in ICs. Acts as a transcriptional suppressor that may suppress UBP1-mediated transcriptional activation. Modulates the placental expression of CYP11A1. The sequence is that of Transcription factor CP2-like protein 1 (Tfcp2l1) from Mus musculus (Mouse).